Here is a 346-residue protein sequence, read N- to C-terminus: Biotin synthase (346 aa).

A Radical SAM core domain is found at 38–256; the sequence is RQVQVSTLLS…IAVARIMMPT (219 aa). 3 residues coordinate [4Fe-4S] cluster: cysteine 53, cysteine 57, and cysteine 60. 4 residues coordinate [2Fe-2S] cluster: cysteine 97, cysteine 128, cysteine 188, and arginine 260.

It belongs to the radical SAM superfamily. Biotin synthase family. As to quaternary structure, homodimer. [4Fe-4S] cluster serves as cofactor. It depends on [2Fe-2S] cluster as a cofactor.

It catalyses the reaction (4R,5S)-dethiobiotin + (sulfur carrier)-SH + 2 reduced [2Fe-2S]-[ferredoxin] + 2 S-adenosyl-L-methionine = (sulfur carrier)-H + biotin + 2 5'-deoxyadenosine + 2 L-methionine + 2 oxidized [2Fe-2S]-[ferredoxin]. It functions in the pathway cofactor biosynthesis; biotin biosynthesis; biotin from 7,8-diaminononanoate: step 2/2. Catalyzes the conversion of dethiobiotin (DTB) to biotin by the insertion of a sulfur atom into dethiobiotin via a radical-based mechanism. This chain is Biotin synthase, found in Escherichia coli O6:H1 (strain CFT073 / ATCC 700928 / UPEC).